We begin with the raw amino-acid sequence, 595 residues long: Arginine--tRNA ligase (595 aa).

A 'HIGH' region motif is present at residues 132–142 (ANPTGPLHVGH).

The protein belongs to the class-I aminoacyl-tRNA synthetase family. In terms of assembly, monomer.

Its subcellular location is the cytoplasm. The enzyme catalyses tRNA(Arg) + L-arginine + ATP = L-arginyl-tRNA(Arg) + AMP + diphosphate. The protein is Arginine--tRNA ligase of Cupriavidus necator (strain ATCC 17699 / DSM 428 / KCTC 22496 / NCIMB 10442 / H16 / Stanier 337) (Ralstonia eutropha).